Reading from the N-terminus, the 777-residue chain is ATPase ARSA1 (777 aa).

Lys110–Ser117 is an ATP binding site. Residue Asp139 is part of the active site. ATP is bound by residues Asn372 and Lys454–Ser461. The active site involves Asp483. Asn712 is an ATP binding site.

This sequence belongs to the arsA ATPase family. In terms of assembly, monomer. Interacts with TOC34.

It localises to the cytoplasm. The protein resides in the cytosol. ATPase required for the post-translational delivery of tail-anchored (TA) proteins to the chloroplast. Required for the accumulation of TOC34, an essential component of the outer chloroplast membrane translocon (TOC) complex. Recognizes and selectively binds the transmembrane domain of TA proteins in the cytosol. This complex then targets to chloroplast, where the tail-anchored protein is released for insertion. This process is regulated by ATP binding and hydrolysis. The protein is ATPase ARSA1 of Chlamydomonas reinhardtii (Chlamydomonas smithii).